Here is an 82-residue protein sequence, read N- to C-terminus: U1-plectoxin-Pt1a (82 aa).

The N-terminal stretch at Met-1 to Ala-20 is a signal peptide. A propeptide spanning residues Glu-21 to Arg-33 is cleaved from the precursor. 5 disulfides stabilise this stretch: Cys-37–Cys-51, Cys-44–Cys-57, Cys-50–Cys-68, Cys-54–Cys-77, and Cys-59–Cys-66. Ser-79 carries the O-palmitoyl serine lipid modification. A propeptide spanning residues Arg-80–Arg-82 is cleaved from the precursor.

Belongs to the neurotoxin 02 (plectoxin) family. 02 (plectoxin) subfamily. In terms of processing, plectoxin-5 presumably undergoes post-translational modification to give rise to plectoxin-6. In terms of tissue distribution, expressed by the venom gland.

It is found in the secreted. Its function is as follows. Potent toxin that may paralyze and/or kill insect pests such as H.virescens (lepidoptera), S.exigua (beet armyworm) and M.sexta (tobacco hornworm). The protein is U1-plectoxin-Pt1a of Plectreurys tristis (Spider).